We begin with the raw amino-acid sequence, 230 residues long: Dephospho-CoA kinase (230 aa).

Residues 3 to 206 (LVGLTGGIAS…EPLTWKERLR (204 aa)) form the DPCK domain. 8-15 (GGIASGKS) contributes to the ATP binding site.

It belongs to the CoaE family.

It carries out the reaction 3'-dephospho-CoA + ATP = ADP + CoA + H(+). The protein operates within cofactor biosynthesis; coenzyme A biosynthesis; CoA from (R)-pantothenate: step 5/5. Functionally, catalyzes the phosphorylation of the 3'-hydroxyl group of dephosphocoenzyme A to form coenzyme A. The sequence is that of Dephospho-CoA kinase from Oryza sativa subsp. japonica (Rice).